A 470-amino-acid polypeptide reads, in one-letter code: Sugar transporter ESL1 (470 aa).

An Essential for the localization to the vacuole membrane motif is present at residues 10–16; the sequence is LEAGLLL. 12 helical membrane passes run 28-48, 68-88, 99-119, 130-150, 157-177, 186-206, 268-288, 303-323, 332-352, 368-388, 404-424, and 430-450; these read ITAV…CFGC, VAQY…GAIF, KGTM…VALA, LSTG…IAEI, GAFV…FYVI, LALI…FIPE, VVIG…GLMY, IGSM…LILV, LLAS…SFCF, IGVV…PWII, LVTL…NFML, and GTFL…YAMV.

It belongs to the major facilitator superfamily. Sugar transporter (TC 2.A.1.1) family. As to expression, expressed in both shoots and roots. In roots, strongly expressed in pericycle and xylem parenchyma cells, and to a lesser extent in the root endodermis. In flowers, expressed in sepals.

It localises to the vacuole membrane. The protein localises to the vesicle. In terms of biological role, sugar transporter. Transports monosaccharides across the vacuolar membrane independently from a proton gradient. May function coordinately with the vacuolar invertase to regulate osmotic pressure by affecting the accumulation of sugar in the cells under abiotic stress conditions. The chain is Sugar transporter ESL1 from Arabidopsis thaliana (Mouse-ear cress).